Reading from the N-terminus, the 248-residue chain is Triosephosphate isomerase (248 aa).

Substrate contacts are provided by Asn10 and Lys12. His95 functions as the Electrophile in the catalytic mechanism. Catalysis depends on Glu165, which acts as the Proton acceptor.

This sequence belongs to the triosephosphate isomerase family. As to quaternary structure, homodimer.

It catalyses the reaction D-glyceraldehyde 3-phosphate = dihydroxyacetone phosphate. The protein operates within carbohydrate biosynthesis; gluconeogenesis. It functions in the pathway carbohydrate degradation; glycolysis; D-glyceraldehyde 3-phosphate from glycerone phosphate: step 1/1. In Zygosaccharomyces bailii, this protein is Triosephosphate isomerase (TPI1).